Consider the following 795-residue polypeptide: Phenylalanine--tRNA ligase beta subunit (795 aa).

The tRNA-binding domain occupies 39–148 (AAKFNGVLVG…SDAPVGTDLR (110 aa)). The B5 domain occupies 401–476 (PKVTEVRLRR…RVYGYNSIPN (76 aa)). 4 residues coordinate Mg(2+): Asp-454, Asp-460, Glu-463, and Glu-464. In terms of domain architecture, FDX-ACB spans 701–794 (SKFPSNRRDI…LAEQFNASLR (94 aa)).

This sequence belongs to the phenylalanyl-tRNA synthetase beta subunit family. Type 1 subfamily. Tetramer of two alpha and two beta subunits. It depends on Mg(2+) as a cofactor.

Its subcellular location is the cytoplasm. It carries out the reaction tRNA(Phe) + L-phenylalanine + ATP = L-phenylalanyl-tRNA(Phe) + AMP + diphosphate + H(+). The sequence is that of Phenylalanine--tRNA ligase beta subunit from Pseudoalteromonas translucida (strain TAC 125).